Reading from the N-terminus, the 37-residue chain is Large ribosomal subunit protein bL36 (37 aa).

It belongs to the bacterial ribosomal protein bL36 family.

The polypeptide is Large ribosomal subunit protein bL36 (Cutibacterium acnes (strain DSM 16379 / KPA171202) (Propionibacterium acnes)).